The sequence spans 1074 residues: DNA helicase B (1074 aa).

Disordered stretches follow at residues 1–38 (MARQ…EEEF), 380–420 (GAKP…HVRS), and 932–1014 (GSCA…FDEE). Residues 20 to 38 (DDEEEDCAQEEEGEQEEEF) are compositionally biased toward acidic residues. Over residues 934 to 946 (CAPSTGFASQPSS) the composition is skewed to polar residues. Residues serine 942 and serine 946 each carry the phosphoserine modification. Threonine 992 is subject to Phosphothreonine. 2 positions are modified to phosphoserine: serine 1015 and serine 1026. Positions 1022-1046 (VEAPSPQVSSVFQNMRLNTLTPRQL) match the Nuclear export signal motif. The disordered stretch occupies residues 1040–1074 (TLTPRQLFKPTDNQDTGTAGVADDANDPSNQEMEM).

Belongs to the RecD family. HELB subfamily. As to quaternary structure, binds to RPA1; this interaction promotes HELB recruitment to chromatin following DNA damage. Interacts with at least two subunits of the DNA polymerase alpha complex. Interacts with CDC45. Interacts with TOPB1. Post-translationally, phosphorylated at Ser-942 by CDK2 during the G1/S transition, resulting in its nuclear export into the cytoplasm. As S phase progresses, its exclusion from the nucleus promotes the activation of long-range resection.

The protein localises to the nucleus. Its subcellular location is the cytoplasm. It is found in the chromosome. It carries out the reaction ATP + H2O = ADP + phosphate + H(+). In terms of biological role, 5'-3' DNA helicase involved in DNA damage response by acting as an inhibitor of DNA end resection. Recruitment to single-stranded DNA (ssDNA) following DNA damage leads to inhibit the nucleases catalyzing resection, such as EXO1, BLM and DNA2, possibly via the 5'-3' ssDNA translocase activity of HELB. As cells approach S phase, DNA end resection is promoted by the nuclear export of HELB following phosphorylation. Acts independently of TP53BP1. Unwinds duplex DNA with 5'-3' polarity. Has single-strand DNA-dependent ATPase and DNA helicase activities. Prefers ATP and dATP as substrates. During S phase, may facilitate cellular recovery from replication stress. This is DNA helicase B from Mus musculus (Mouse).